The chain runs to 323 residues: Protease Do-like 5, chloroplastic (323 aa).

The transit peptide at 1-28 (MTMALASSKAFSSIFNTLSPINQSKFVL) directs the protein to the chloroplast. The transit peptide at 29 to 73 (ACSGSNHVDVIDRRRRIMIFGSSLALTSSLLGSNQQRLPMESAIA) directs the protein to the thylakoid. Catalysis depends on charge relay system residues His147, Asp188, and Ser266. The interval 186–283 (DNDLAVLKIE…YGHTIGVNTA (98 aa)) is serine protease.

This sequence belongs to the peptidase S1C family.

It is found in the plastid. The protein localises to the chloroplast thylakoid lumen. Functionally, probable serine protease. The protein is Protease Do-like 5, chloroplastic (DEGP5) of Arabidopsis thaliana (Mouse-ear cress).